The chain runs to 919 residues: Rho guanine nucleotide exchange factor 1 (919 aa).

Positions 39-230 (DQNSQFQSLE…SLYMRHLGVR (192 aa)) constitute an RGSL domain. The interval 247–402 (VMGNRRSDEP…PPGWRELVPS (156 aa)) is disordered. A compositionally biased stretch (basic and acidic residues) spans 281–310 (DCRHLKVEVDEKPGPADRKGSLGISSRDRT). Residues 363 to 379 (STEDNGETESPEPGDDG) are compositionally biased toward acidic residues. Ser-372 bears the Phosphoserine mark. The DH domain occupies 414–603 (KRQEVISELL…REILHHVNQA (190 aa)). In terms of domain architecture, PH spans 645 to 758 (KLVHEGPLTW…WCALITETAG (114 aa)). Thr-693 is subject to Phosphothreonine. Tyr-736 is modified (phosphotyrosine; by JAK2). Disordered stretches follow at residues 761–800 (KVPA…PADA) and 839–865 (TEED…PTHT). The span at 775–787 (PSSTREPLLSSSE) shows a compositional bias: low complexity. Residues 864–893 (HTQEVEENLLSLEVVIKQLEELEEEFCRLR) adopt a coiled-coil conformation. The residue at position 904 (Ser-904) is a Phosphoserine.

In terms of assembly, interacts with RHOA, GNA12 and GNA13. Homooligomerizes through the coiled coil region. Interacts with CTNNAL1. May interact with CCPG1. Phosphorylated by PKCA. Angiotensin-2 induced Tyr-736 phosphorylation is mediated by JAK2.

Its subcellular location is the cytoplasm. The protein localises to the membrane. Functionally, seems to play a role in the regulation of RhoA GTPase by guanine nucleotide-binding alpha-12 (GNA12) and alpha-13 (GNA13) subunits. Acts as a GTPase-activating protein (GAP) for GNA12 and GNA13, and as guanine nucleotide exchange factor (GEF) for RhoA GTPase. Activated G alpha 13/GNA13 stimulates the RhoGEF activity through interaction with the RGS-like domain. This GEF activity is inhibited by binding to activated GNA12. Mediates angiotensin-2-induced RhoA activation. In lymphoid follicles, may trigger activation of GNA13 as part of S1PR2-dependent signaling pathway that leads to inhibition of germinal center (GC) B cell growth and migration outside the GC niche. This is Rho guanine nucleotide exchange factor 1 (Arhgef1) from Rattus norvegicus (Rat).